The sequence spans 427 residues: MLDINLLRNDIEAVAARLAGRGYTLDTAAFNQLESERKSLQSRMQELQAKRNATSKQIGIAKGKGEDVSAILAEVATLGDELKAAEQAFDGVQGQLDAWLMSIPNLPHESVPVGKDENDNVEVRRVGVPRQFDFEVKDHVDVGAPLGLDFDTGAKLSGARFTVLKGDIARLHRAIAQFMLNTHTGSHGYQEHYTPYIVNDTALLGTGQLPKFADDMFKVTRGGDESAVPQYLISTSEVTLTNTVADTILQESELPKKMTAHSPCFRSEAGSYGRDTRGMIRQHQFDKVEMVRVEKPEHSYAALEEMVGHAENILKALELPYRVITLCTGDMGFGSAKTYDLEVWLPAQNTYREISSCSNCEAFQARRMKARYKDENGKNQLVHTLNGSGLAVGRTLVAILENYQNADGSVTVPTVLRPFMGKDRIGG.

235 to 237 contributes to the L-serine binding site; it reads TSE. 266-268 is an ATP binding site; sequence RSE. Glutamate 289 provides a ligand contact to L-serine. 353 to 356 contacts ATP; sequence EISS. Serine 388 serves as a coordination point for L-serine.

This sequence belongs to the class-II aminoacyl-tRNA synthetase family. Type-1 seryl-tRNA synthetase subfamily. Homodimer. The tRNA molecule binds across the dimer.

The protein localises to the cytoplasm. The catalysed reaction is tRNA(Ser) + L-serine + ATP = L-seryl-tRNA(Ser) + AMP + diphosphate + H(+). The enzyme catalyses tRNA(Sec) + L-serine + ATP = L-seryl-tRNA(Sec) + AMP + diphosphate + H(+). Its pathway is aminoacyl-tRNA biosynthesis; selenocysteinyl-tRNA(Sec) biosynthesis; L-seryl-tRNA(Sec) from L-serine and tRNA(Sec): step 1/1. In terms of biological role, catalyzes the attachment of serine to tRNA(Ser). Is also able to aminoacylate tRNA(Sec) with serine, to form the misacylated tRNA L-seryl-tRNA(Sec), which will be further converted into selenocysteinyl-tRNA(Sec). The sequence is that of Serine--tRNA ligase from Chromobacterium violaceum (strain ATCC 12472 / DSM 30191 / JCM 1249 / CCUG 213 / NBRC 12614 / NCIMB 9131 / NCTC 9757 / MK).